A 133-amino-acid polypeptide reads, in one-letter code: Basic phospholipase A2 beta-bungarotoxin A-AL2 chain (133 aa).

The first 5 residues, 1–5 (FLLGA), serve as a signal peptide directing secretion. Positions 6-13 (ANIPPHPL) are excised as a propeptide. Intrachain disulfides connect cysteine 40–cysteine 132, cysteine 42–cysteine 58, cysteine 57–cysteine 113, cysteine 64–cysteine 106, cysteine 74–cysteine 99, and cysteine 92–cysteine 104. Ca(2+)-binding residues include tyrosine 41, glycine 43, and glycine 45. Histidine 61 is an active-site residue. Aspartate 62 serves as a coordination point for Ca(2+). The active site involves aspartate 107.

It belongs to the phospholipase A2 family. Group I subfamily. D49 sub-subfamily. As to quaternary structure, heterodimer; disulfide-linked. The A chains have phospholipase A2 activity and the B chains show homology with the basic protease inhibitors. Requires Ca(2+) as cofactor. In terms of tissue distribution, expressed by the venom gland.

Its subcellular location is the secreted. The catalysed reaction is a 1,2-diacyl-sn-glycero-3-phosphocholine + H2O = a 1-acyl-sn-glycero-3-phosphocholine + a fatty acid + H(+). In terms of biological role, snake venom phospholipase A2 (PLA2) that inhibits neuromuscular transmission by blocking acetylcholine release from the nerve termini. PLA2 catalyzes the calcium-dependent hydrolysis of the 2-acyl groups in 3-sn-phosphoglycerides. In Bungarus multicinctus (Many-banded krait), this protein is Basic phospholipase A2 beta-bungarotoxin A-AL2 chain.